We begin with the raw amino-acid sequence, 224 residues long: Cerebellin-2 (224 aa).

Positions 1 to 51 (MQAPGRGPLGLRLMMPGRRGALREPGGCGSCLGVALALLLLLLPACCPVRA) are cleaved as a signal peptide. N-linked (GlcNAc...) asparagine glycans are attached at residues Asn-53 and Asn-110. The C1q domain occupies 88–224 (SGSAKVAFSA…TFSGFLVFPL (137 aa)).

In terms of assembly, homohexamer; disulfide-linked homotrimers. The trimers are assembled via the globular C1q domains. The trimers associate via N-terminal cysteine residues to form disulfide-linked hexamers. May form homooligomers or heterooligomers with CBLN1 and CBLN3 prior to secretion. Once secreted, does not interact with other CBLN family members. Interacts with GRID2, and more weakly with GRID1. Interacts with NRXN1 and NRXN2 long and short isoforms produced by alternative promoter usage. Weakly interacts with NRXN3 short isoform and not at all with NRXN3 long isoform.

It is found in the secreted. Functionally, acts as a synaptic organizer in specific subsets of neurons in the brain. Essential for long-term maintenance but not establishment of excitatory synapses. Functions as part of a trans-synaptic complex by binding to postsynaptic GRID1 and presynaptic neurexins. This interaction helps regulate the activity of NMDA and AMPA receptors at hippocampal synapses without affecting synapse formation. NRXN1B-CBLN2-GRID1 complex transduce presynaptic signals into postsynaptic NMDAR response. NRXN3B-CBLN2-GRID1 complex transduce presynaptic signals into postsynaptic AMPAR response. The chain is Cerebellin-2 from Homo sapiens (Human).